Here is an 879-residue protein sequence, read N- to C-terminus: Alanine--tRNA ligase (879 aa).

Zn(2+) is bound by residues histidine 566, histidine 570, cysteine 668, and histidine 672.

The protein belongs to the class-II aminoacyl-tRNA synthetase family. The cofactor is Zn(2+).

The protein resides in the cytoplasm. The catalysed reaction is tRNA(Ala) + L-alanine + ATP = L-alanyl-tRNA(Ala) + AMP + diphosphate. Catalyzes the attachment of alanine to tRNA(Ala) in a two-step reaction: alanine is first activated by ATP to form Ala-AMP and then transferred to the acceptor end of tRNA(Ala). Also edits incorrectly charged Ser-tRNA(Ala) and Gly-tRNA(Ala) via its editing domain. The chain is Alanine--tRNA ligase from Clostridium botulinum (strain Alaska E43 / Type E3).